The primary structure comprises 211 residues: ATP phosphoribosyltransferase (211 aa).

Belongs to the ATP phosphoribosyltransferase family. Short subfamily. As to quaternary structure, heteromultimer composed of HisG and HisZ subunits.

The protein localises to the cytoplasm. The enzyme catalyses 1-(5-phospho-beta-D-ribosyl)-ATP + diphosphate = 5-phospho-alpha-D-ribose 1-diphosphate + ATP. It functions in the pathway amino-acid biosynthesis; L-histidine biosynthesis; L-histidine from 5-phospho-alpha-D-ribose 1-diphosphate: step 1/9. Catalyzes the condensation of ATP and 5-phosphoribose 1-diphosphate to form N'-(5'-phosphoribosyl)-ATP (PR-ATP). Has a crucial role in the pathway because the rate of histidine biosynthesis seems to be controlled primarily by regulation of HisG enzymatic activity. In Clostridium botulinum (strain 657 / Type Ba4), this protein is ATP phosphoribosyltransferase.